Reading from the N-terminus, the 342-residue chain is Phosphatidate cytidylyltransferase, mitochondrial (342 aa).

This sequence belongs to the TAM41 family. It depends on Mg(2+) as a cofactor. Requires Co(2+) as cofactor. Cu(2+) is required as a cofactor.

It is found in the mitochondrion inner membrane. The enzyme catalyses a 1,2-diacyl-sn-glycero-3-phosphate + CTP + H(+) = a CDP-1,2-diacyl-sn-glycerol + diphosphate. It participates in phospholipid metabolism; CDP-diacylglycerol biosynthesis; CDP-diacylglycerol from sn-glycerol 3-phosphate: step 3/3. In terms of biological role, catalyzes the formation of CDP-diacylglycerol (CDP-DAG) from phosphatidic acid (PA) in the mitochondrial inner membrane. Required for the biosynthesis of the dimeric phospholipid cardiolipin, which stabilizes supercomplexes of the mitochondrial respiratory chain in the mitochondrial inner membrane. This is Phosphatidate cytidylyltransferase, mitochondrial from Drosophila melanogaster (Fruit fly).